The chain runs to 240 residues: Ribonuclease HII (240 aa).

The 200-residue stretch at 27–226 (GPVAGVDEAG…REARSLRLED (200 aa)) folds into the RNase H type-2 domain. Asp33, Glu34, and Asp127 together coordinate a divalent metal cation.

Belongs to the RNase HII family. Mn(2+) is required as a cofactor. The cofactor is Mg(2+).

The protein localises to the cytoplasm. The catalysed reaction is Endonucleolytic cleavage to 5'-phosphomonoester.. Endonuclease that specifically degrades the RNA of RNA-DNA hybrids. The chain is Ribonuclease HII from Frankia casuarinae (strain DSM 45818 / CECT 9043 / HFP020203 / CcI3).